A 973-amino-acid polypeptide reads, in one-letter code: DNA repair protein rhp26 (973 aa).

Positions 35–107 form a coiled coil; that stretch reads ESREIEKKRL…DIKRRLNNED (73 aa). Residues 230–251 are disordered; the sequence is RDQASASENNKDRGEFEGKDEW. Residues 238–251 show a composition bias toward basic and acidic residues; sequence NNKDRGEFEGKDEW. Residues 289–490 enclose the Helicase ATP-binding domain; that stretch reads WELYCQEAGG…WNLFDFVFPG (202 aa). Position 302 to 309 (302 to 309) interacts with ATP; it reads DEMGLGKT. A disordered region spans residues 367 to 386; the sequence is SREKRQYESDASESEAEESK. The short motif at 441-444 is the DEAH box element; that stretch reads DEGH. A Helicase C-terminal domain is found at 629–789; it reads VIRALLTLWK…RRFFKMTDLH (161 aa). Disordered regions lie at residues 803–846, 863–882, and 930–973; these read ETGS…KGKK, KYKPPQESNVTKTNSDSTLG, and AVSS…KQRR. A compositionally biased stretch (basic residues) spans 834–846; that stretch reads DRKKHKIHDKGKK. 2 stretches are compositionally biased toward polar residues: residues 868–882 and 947–965; these read QESNVTKTNSDSTLG and STNVPGTSKPSGPITSSTL.

It is found in the cytoplasm. It localises to the nucleus. Involved in transcription-coupled repair (TCR). This chain is DNA repair protein rhp26 (rhp26), found in Schizosaccharomyces pombe (strain 972 / ATCC 24843) (Fission yeast).